The primary structure comprises 144 residues: Deoxyuridine 5'-triphosphate nucleotidohydrolase (144 aa).

Substrate is bound by residues 63–65 (RSG), N76, and 80–82 (TVD).

It belongs to the dUTPase family. It depends on Mg(2+) as a cofactor.

It catalyses the reaction dUTP + H2O = dUMP + diphosphate + H(+). Its pathway is pyrimidine metabolism; dUMP biosynthesis; dUMP from dCTP (dUTP route): step 2/2. Its function is as follows. This enzyme is involved in nucleotide metabolism: it produces dUMP, the immediate precursor of thymidine nucleotides and it decreases the intracellular concentration of dUTP so that uracil cannot be incorporated into DNA. The protein is Deoxyuridine 5'-triphosphate nucleotidohydrolase of Treponema denticola (strain ATCC 35405 / DSM 14222 / CIP 103919 / JCM 8153 / KCTC 15104).